The following is a 637-amino-acid chain: 3D-(3,5/4)-trihydroxycyclohexane-1,2-dione hydrolase (637 aa).

Glu65 is a thiamine diphosphate binding site. The interval 441 to 521 (SLPGDLQRLW…INVLLFDNSG (81 aa)) is thiamine pyrophosphate binding. Asp492 and Asn519 together coordinate Mg(2+).

It belongs to the TPP enzyme family. It depends on Mg(2+) as a cofactor. Requires thiamine diphosphate as cofactor.

The enzyme catalyses 3D-3,5/4-trihydroxycyclohexane-1,2-dione + H2O = 5-deoxy-D-glucuronate + H(+). It functions in the pathway polyol metabolism; myo-inositol degradation into acetyl-CoA; acetyl-CoA from myo-inositol: step 3/7. In terms of biological role, involved in the cleavage of the C1-C2 bond of 3D-(3,5/4)-trihydroxycyclohexane-1,2-dione (THcHDO) to yield 5-deoxy-glucuronate (5DG). The protein is 3D-(3,5/4)-trihydroxycyclohexane-1,2-dione hydrolase of Halalkalibacterium halodurans (strain ATCC BAA-125 / DSM 18197 / FERM 7344 / JCM 9153 / C-125) (Bacillus halodurans).